We begin with the raw amino-acid sequence, 362 residues long: Apelin receptor A (362 aa).

Residues 1 to 34 (MEPTSEYTETYDYYDTGYNDSGCDYSEWEPSYSL) lie on the Extracellular side of the membrane. A glycan (N-linked (GlcNAc...) asparagine) is linked at asparagine 19. 2 disulfide bridges follow: cysteine 23/cysteine 286 and cysteine 105/cysteine 184. Residues 35-55 (IPVLYMLIFILGLSGNGVVIF) form a helical membrane-spanning segment. Residues 56 to 73 (TVWRAKSKRRAADVYIGN) lie on the Cytoplasmic side of the membrane. Residues 74 to 94 (LALADLTFVITLPLWAVYTAL) form a helical membrane-spanning segment. Over 95 to 106 (GYHWPFGVALCK) the chain is Extracellular. A helical membrane pass occupies residues 107–127 (ISSYVVLVNMYASVFCLTCLS). Residues 128–149 (FDRYLAIVHSLSSGRLRSRATM) are Cytoplasmic-facing. Residues 150–170 (LASLGAIWFLSCLLAVPTLLF) traverse the membrane as a helical segment. The Extracellular portion of the chain corresponds to 171–211 (RTTVDDTGSNRTTCAMDFSLVTLNQDHESLWIAGLSLSSSA). An N-linked (GlcNAc...) asparagine glycan is attached at asparagine 180. Residues 212–232 (LGFLLPFLAMTVCYCFIGCTV) traverse the membrane as a helical segment. Topologically, residues 233–248 (TRHFSHLRKEDQKKRR) are cytoplasmic. Residues 249–269 (LLKIITTLVVVFAFCWTPFHV) traverse the membrane as a helical segment. The Extracellular portion of the chain corresponds to 270–284 (LKSMDALSYLDLAPN). The helical transmembrane segment at 285-305 (SCGFLHFLLLAHPYATCLAYV) threads the bilayer. Topologically, residues 306-362 (NSCLNPFLYAFFDLRFRSQCLCLLNLKKAMHGHMSSMSSTLSAQTQKSEVQSLATKV) are cytoplasmic.

This sequence belongs to the G-protein coupled receptor 1 family. As to expression, first expressed before epiboly in dorsal precursors. During epiboly, expressed in the enveloping layer, yolk syncytial layer and migrating mesendoderm. During segmentation stages, expressed in epithelial structures such as adaxial cells, border cells of the newly formed somites, developing lens, otic vesicles and venous vasculature.

It is found in the cell membrane. Functionally, g protein-coupled receptor for peptide hormones apelin (apln) and apelin receptor early endogenous ligand (apela), that plays a role in the regulation of normal cardiovascular function and fluid homeostasis. When acting as apelin receptor, activates both G(i) protein pathway that inhibits adenylate cyclase activity, and the beta-arrestin pathway that promotes internalization of the receptor. Also functions as mechanoreceptor that is activated by pathological stimuli in a G-protein-independent fashion to induce beta-arrestin signaling, hence eliciting cardiac hypertrophy. However, the presence of apelin ligand blunts cardiac hypertrophic induction from APLNR/APJ on response to pathological stimuli. Plays a key role in early development such as gastrulation, blood vessels formation and heart morphogenesis by acting as a receptor for apela hormone, promoting endoderm and mesendoderm cell migration and regulating the migration of cells fated to become myocardial progenitors, respectively. Positively regulates angioblast migration toward the embryonic midline, i.e. the position of the future vessel formation, during vasculogenesis. May promote sinus venosus (SV)-derived endothelial cells migration into the developing heart to promote coronary blood vessel development. Required for cardiovascular development, particularly for intersomitic vein angiogenesis by acting as a receptor for apln hormone. Also plays a role in various processes in adults such as regulation of blood vessel formation, blood pressure, heart contractility, and heart failure. Acts redundantly with agtrl1b in heart development. The sequence is that of Apelin receptor A (aplnra) from Danio rerio (Zebrafish).